The primary structure comprises 110 residues: UPF0060 membrane protein Pnap_4944 (110 aa).

4 consecutive transmembrane segments (helical) span residues 8–28 (ILFA…WLVL), 33–53 (SLLL…LLTL), 65–85 (YGGM…GIAL), and 88–108 (WDLS…MQPS).

The protein belongs to the UPF0060 family.

It is found in the cell inner membrane. This Polaromonas naphthalenivorans (strain CJ2) protein is UPF0060 membrane protein Pnap_4944.